The primary structure comprises 211 residues: MKLWDVVAVCLVLLHTASAFPLPAGKRLLEAPAEDHSLGHRRVPFALTSDSNMPEDYPDQFDDVMDFIQATIKRLKRSPDKQAAALPRRERNRQAAAASPENSRGKGRRGQRGKNRGCVLTAIHLNVTDLGLGYETKEELIFRYCSGSCESAETMYDKILKNLSRSRRLTSDKVGQACCRPVAFDDDLSFLDDNLVYHILRKHSAKRCGCI.

Residues 1–19 form the signal peptide; the sequence is MKLWDVVAVCLVLLHTASA. Residues 20-75 constitute a propeptide that is removed on maturation; it reads FPLPAGKRLLEAPAEDHSLGHRRVPFALTSDSNMPEDYPDQFDDVMDFIQATIKRL. The tract at residues 76 to 113 is disordered; the sequence is KRSPDKQAAALPRRERNRQAAAASPENSRGKGRRGQRG. Intrachain disulfides connect Cys-118–Cys-179, Cys-145–Cys-208, and Cys-149–Cys-210. N-linked (GlcNAc...) asparagine glycans are attached at residues Asn-126 and Asn-162.

The protein belongs to the TGF-beta family. GDNF subfamily. Homodimer; disulfide-linked. Interacts with GFRA1 coreceptor and RET: forms a 2:2:2 ternary complex composed of GDNF ligand, GFRA1 and RET receptor. Interacts (via propeptide) with SORL1 (via N-terminal ectodomain); this interaction affects GDNF-regulated, but not constitutive secretion. Also interacts with SORL1 in complex with GFRA1; this interaction leads to GDNF endocytosis and lysosomal degradation. Expressed in both the central nervous system (CNS) and in non-CNS tissues. Expressed in a highly dynamic pattern in the anterior neuroectoderm during the early stages of neurogenesis between 7.5 dpc and 10.5 dpc. Beginning at 10.5 dpc, expression begins in mesenchymal tissues of several organs including the digestive tract, kidney, testis, frontonasal mass, tooth primordium, tongue, mandible, whisker follicles, ear, eye, limb bud and in distinct regions of the brain. Also expressed in the heart, ileum, liver and muscle.

The protein resides in the secreted. Its function is as follows. Neurotrophic factor that enhances survival and morphological differentiation of dopaminergic neurons and increases their high-affinity dopamine uptake. Acts by binding to its coreceptor, GFRA1, leading to autophosphorylation and activation of the RET receptor. Involved in the development of the neural crest. This is Glial cell line-derived neurotrophic factor (Gdnf) from Mus musculus (Mouse).